Here is a 243-residue protein sequence, read N- to C-terminus: Killer cell lectin-like receptor subfamily I member 1 (243 aa).

Over 1 to 80 (MPHSKHRDYT…RQGPKSAVWR (80 aa)) the chain is Cytoplasmic. 2 short sequence motifs (ITIM motif) span residues 16 to 21 (IPYTEL) and 47 to 52 (LKYAEL). A helical; Signal-anchor for type II membrane protein membrane pass occupies residues 81–101 (VVTCVLGVLCVVLMITMGILV). The Extracellular portion of the chain corresponds to 102–243 (PKLFSGQEEQ…KPYACEFNKM (142 aa)). 5 N-linked (GlcNAc...) asparagine glycosylation sites follow: Asn-123, Asn-191, Asn-194, Asn-200, and Asn-214. Residues 137 to 239 (FGNNFYLFFR…CSSKKPYACE (103 aa)) enclose the C-type lectin domain. 2 cysteine pairs are disulfide-bonded: Cys-158-Cys-238 and Cys-217-Cys-230.

As to quaternary structure, heterodimer with KLRE1. Interacts with PTPN6. Expressed in natural killer (NK) cells.

The protein localises to the cell membrane. In terms of biological role, lectin-like receptor for natural killer (NK) cells. Heterodimer formation with KLRE1 mediates inhibition of NK cell cytolytic activity. The sequence is that of Killer cell lectin-like receptor subfamily I member 1 from Rattus norvegicus (Rat).